The primary structure comprises 369 residues: Flagellar P-ring protein (369 aa).

A signal peptide spans 1–22 (MFNARRLIAATLLMSCAFGAHA).

This sequence belongs to the FlgI family. As to quaternary structure, the basal body constitutes a major portion of the flagellar organelle and consists of four rings (L,P,S, and M) mounted on a central rod.

It localises to the periplasm. Its subcellular location is the bacterial flagellum basal body. Assembles around the rod to form the L-ring and probably protects the motor/basal body from shearing forces during rotation. The chain is Flagellar P-ring protein from Pseudomonas entomophila (strain L48).